The following is a 367-amino-acid chain: tRNA-specific 2-thiouridylase MnmA (367 aa).

ATP is bound by residues Leu9–Ser16 and Phe35. Catalysis depends on Cys107, which acts as the Nucleophile. Cys107 and Cys205 form a disulfide bridge. Gly131 contacts ATP. The interval Lys155–Gln157 is interaction with tRNA. The active-site Cysteine persulfide intermediate is the Cys205.

It belongs to the MnmA/TRMU family.

It is found in the cytoplasm. It catalyses the reaction S-sulfanyl-L-cysteinyl-[protein] + uridine(34) in tRNA + AH2 + ATP = 2-thiouridine(34) in tRNA + L-cysteinyl-[protein] + A + AMP + diphosphate + H(+). Its function is as follows. Catalyzes the 2-thiolation of uridine at the wobble position (U34) of tRNA, leading to the formation of s(2)U34. The polypeptide is tRNA-specific 2-thiouridylase MnmA (Petrotoga mobilis (strain DSM 10674 / SJ95)).